Consider the following 378-residue polypeptide: Forkhead box protein F1 (378 aa).

Residues 1–45 (MSAPDKQQPPHGGGTGGGGGAGGQAMDPAAAGPTKAKKTNAGVRR) form a disordered region. Over residues 11-23 (HGGGTGGGGGAGG) the composition is skewed to gly residues. Residues 24–42 (QAMDPAAAGPTKAKKTNAG) are compositionally biased toward low complexity. The segment at residues 47 to 138 (EKPPYSYIAL…EFMFEEGSFR (92 aa)) is a DNA-binding region (fork-head).

In terms of tissue distribution, expressed primarily in lung in alveolar type II pneumocyte cells, and to a lesser extent in placenta, stomach, intestine and colon.

It is found in the nucleus. Its function is as follows. Probable transcription activator for a number of lung-specific genes. The chain is Forkhead box protein F1 (Foxf1) from Mus musculus (Mouse).